Reading from the N-terminus, the 220-residue chain is MLTSRRWAVIYTRTSERNCGGAWCTNGVRRRRQVHLPSVRARAMFPDRWHEYTACGAVIEGTRLLCFKVPLNAELFEYVTSDEDRWTAASVLARHSALGAVIDLTNTARYYDGAQMVKMGLLYKKIRVPGRAVPDDDIVAEFIETVDEFFRRCPTMLVAVHWTHGLNRSGYLVCRYMVERLGVSPTDAIARFETARGHKIERTNYLQDLLARKHVRGQPN.

The Tyrosine-protein phosphatase domain maps to 67–218; sequence FKVPLNAELF…LLARKHVRGQ (152 aa).

This sequence belongs to the protein-tyrosine phosphatase family. Non-receptor class CDC14 subfamily.

The enzyme catalyses O-phospho-L-tyrosyl-[protein] + H2O = L-tyrosyl-[protein] + phosphate. Could be inactive as the active site cysteine is modified to tryptophan. The polypeptide is Putative tyrosine-protein phosphatase 1 (PTP-1) (Orgyia pseudotsugata multicapsid polyhedrosis virus (OpMNPV)).